Reading from the N-terminus, the 107-residue chain is UPF0060 membrane protein glr4174 (107 aa).

A run of 4 helical transmembrane segments spans residues 1-21 (MALLLFGLAAAAEIGGCFAFW), 26-46 (LGKNPLWLAPGLVSLVVFAWL), 58-78 (AYAAYGGVYIAASLVWLWLVE), and 87-107 (LAGALLCLAGAAVILFADRSP).

This sequence belongs to the UPF0060 family.

The protein resides in the cell inner membrane. This chain is UPF0060 membrane protein glr4174, found in Gloeobacter violaceus (strain ATCC 29082 / PCC 7421).